The chain runs to 85 residues: MKTLLLTLVVVTIVCLDLGNTRICDDSNIPSERTPKRCQGGYNICYKINFPTPGYELLQIKGCAARCPTNPRFPKAECCATDNCI.

Positions 1–21 (MKTLLLTLVVVTIVCLDLGNT) are cleaved as a signal peptide. 4 cysteine pairs are disulfide-bonded: Cys-24–Cys-45, Cys-38–Cys-63, Cys-67–Cys-78, and Cys-79–Cys-84.

It belongs to the three-finger toxin family. Short-chain subfamily. Expressed by the venom gland.

It localises to the secreted. The sequence is that of Three-finger toxin MALT0044C from Micrurus altirostris (Uruguayan coral snake).